Consider the following 152-residue polypeptide: Large ribosomal subunit protein uL22 (152 aa).

Over residues alanine 124 to glutamate 145 the composition is skewed to low complexity. The disordered stretch occupies residues alanine 124–glutamate 152.

Belongs to the universal ribosomal protein uL22 family. As to quaternary structure, part of the 50S ribosomal subunit.

In terms of biological role, this protein binds specifically to 23S rRNA; its binding is stimulated by other ribosomal proteins, e.g. L4, L17, and L20. It is important during the early stages of 50S assembly. It makes multiple contacts with different domains of the 23S rRNA in the assembled 50S subunit and ribosome. Its function is as follows. The globular domain of the protein is located near the polypeptide exit tunnel on the outside of the subunit, while an extended beta-hairpin is found that lines the wall of the exit tunnel in the center of the 70S ribosome. The protein is Large ribosomal subunit protein uL22 of Salinispora tropica (strain ATCC BAA-916 / DSM 44818 / JCM 13857 / NBRC 105044 / CNB-440).